Reading from the N-terminus, the 461-residue chain is Deoxyguanosinetriphosphate triphosphohydrolase-like protein (461 aa).

The tract at residues 22–41 is disordered; sequence ERFLPDPPREKDNRPPFRRD. Over residues 24-41 the composition is skewed to basic and acidic residues; it reads FLPDPPREKDNRPPFRRD. The HD domain occupies 72 to 285; sequence RLTHSLEVAQ…MELADDIAYG (214 aa).

Belongs to the dGTPase family. Type 2 subfamily.

The protein is Deoxyguanosinetriphosphate triphosphohydrolase-like protein of Haemophilus influenzae (strain PittEE).